Here is a 452-residue protein sequence, read N- to C-terminus: uncharacterized protein (452 aa).

Positions 1–20 are cleaved as a signal peptide; the sequence is MQFFGSLFVSLLGAAGLANA. Positions 130–151 are disordered; the sequence is TQSSSNSTSTMNSTGSVSGGSV.

Its subcellular location is the endoplasmic reticulum. This is an uncharacterized protein from Schizosaccharomyces pombe (strain 972 / ATCC 24843) (Fission yeast).